The sequence spans 366 residues: Mannonate dehydratase (366 aa).

The protein belongs to the mannonate dehydratase family. It depends on Fe(2+) as a cofactor. Requires Mn(2+) as cofactor.

The enzyme catalyses D-mannonate = 2-dehydro-3-deoxy-D-gluconate + H2O. It functions in the pathway carbohydrate metabolism; pentose and glucuronate interconversion. In terms of biological role, catalyzes the dehydration of D-mannonate. This is Mannonate dehydratase from Streptococcus suis (strain 98HAH33).